Here is a 540-residue protein sequence, read N- to C-terminus: Alanine aminotransferase 2, mitochondrial (540 aa).

Residues 1 to 46 constitute a mitochondrion transit peptide; it reads MRRFLINQAKGLVDHSRRQHHHKSPSFLSPQPRPLASSPPALSRFF. Residues 11–40 form a disordered region; the sequence is GLVDHSRRQHHHKSPSFLSPQPRPLASSPP. A compositionally biased stretch (low complexity) spans 28-40; it reads LSPQPRPLASSPP. Residue Lys-357 is modified to N6-(pyridoxal phosphate)lysine.

Belongs to the class-I pyridoxal-phosphate-dependent aminotransferase family. Alanine aminotransferase subfamily. In terms of assembly, homodimer. It depends on pyridoxal 5'-phosphate as a cofactor. Post-translationally, the N-terminus is blocked. In terms of tissue distribution, expressed in shoots, essentially in leaves and flowers, mostly in vascular tissues. Also detected in stems and roots.

It is found in the mitochondrion. It carries out the reaction L-alanine + 2-oxoglutarate = pyruvate + L-glutamate. It participates in photosynthesis; C4 acid pathway. Its pathway is amino-acid degradation; L-alanine degradation via transaminase pathway; pyruvate from L-alanine: step 1/1. The sequence is that of Alanine aminotransferase 2, mitochondrial (ALAAT2) from Arabidopsis thaliana (Mouse-ear cress).